A 345-amino-acid polypeptide reads, in one-letter code: Phosphoribosylformylglycinamidine cyclo-ligase (345 aa).

It belongs to the AIR synthase family.

Its subcellular location is the cytoplasm. The catalysed reaction is 2-formamido-N(1)-(5-O-phospho-beta-D-ribosyl)acetamidine + ATP = 5-amino-1-(5-phospho-beta-D-ribosyl)imidazole + ADP + phosphate + H(+). Its pathway is purine metabolism; IMP biosynthesis via de novo pathway; 5-amino-1-(5-phospho-D-ribosyl)imidazole from N(2)-formyl-N(1)-(5-phospho-D-ribosyl)glycinamide: step 2/2. This Synechococcus sp. (strain CC9902) protein is Phosphoribosylformylglycinamidine cyclo-ligase.